Consider the following 621-residue polypeptide: uncharacterized protein (621 aa).

Residues 1-15 (MRRSVCYVTPSVARA) form the signal peptide.

The protein belongs to the chlamydial CPn_0512/CT_425/TC_0708 family.

This is an uncharacterized protein from Chlamydia trachomatis serovar D (strain ATCC VR-885 / DSM 19411 / UW-3/Cx).